Reading from the N-terminus, the 337-residue chain is Cytoskeleton protein RodZ (337 aa).

The Cytoplasmic portion of the chain corresponds to 1–111 (MNTEATHDQN…LGKRRKKRDG (111 aa)). The HTH cro/C1-type domain occupies 19-71 (LRNAREQLGLSQQAVAERLCLKVSTVRDIEEDKAPADLASTFLRGYIRSYARL). A DNA-binding region (H-T-H motif) is located at residues 30–49 (QQAVAERLCLKVSTVRDIEE). A helical; Signal-anchor for type II membrane protein transmembrane segment spans residues 112 to 132 (WLMTFTWLVLFVVVGLTGAWW). The Periplasmic segment spans residues 133–337 (WQNHKAQQEE…TLNAEQSPAQ (205 aa)). A disordered region spans residues 155-220 (NAGGDSAQSV…QNAVVAPSQA (66 aa)). Over residues 160–192 (SAQSVPLDTSEAASQDSTPAPTAPVDSTATNAV) the composition is skewed to polar residues. The span at 193–217 (PQTPDASATTTAPAADAQQNAVVAP) shows a compositional bias: low complexity.

The protein belongs to the RodZ family.

Its subcellular location is the cell inner membrane. In terms of biological role, cytoskeletal protein that is involved in cell-shape control through regulation of the length of the long axis. This chain is Cytoskeleton protein RodZ, found in Citrobacter koseri (strain ATCC BAA-895 / CDC 4225-83 / SGSC4696).